The primary structure comprises 246 residues: NADH-quinone oxidoreductase subunit C (246 aa).

This sequence belongs to the complex I 30 kDa subunit family. In terms of assembly, NDH-1 is composed of 14 different subunits. Subunits NuoB, C, D, E, F, and G constitute the peripheral sector of the complex.

It localises to the cell inner membrane. It carries out the reaction a quinone + NADH + 5 H(+)(in) = a quinol + NAD(+) + 4 H(+)(out). Its function is as follows. NDH-1 shuttles electrons from NADH, via FMN and iron-sulfur (Fe-S) centers, to quinones in the respiratory chain. The immediate electron acceptor for the enzyme in this species is believed to be ubiquinone. Couples the redox reaction to proton translocation (for every two electrons transferred, four hydrogen ions are translocated across the cytoplasmic membrane), and thus conserves the redox energy in a proton gradient. This Halorhodospira halophila (strain DSM 244 / SL1) (Ectothiorhodospira halophila (strain DSM 244 / SL1)) protein is NADH-quinone oxidoreductase subunit C.